A 223-amino-acid polypeptide reads, in one-letter code: MTGTPGAATAGDGEAPERSPPFSPNYDLTGKVMLLGDSGVGKTCFLIQFKDGAFLSGTFIATVGIDSRNKVVTVDGARVKLQIWDTAGQERFRSVTHAYYRDAQALLLLYDITNQSSFDNIRAWLTEIHEYAQRDVVIMLLGNKADVSSERVIRSEDGETLAREYGVPFMETSAKTGMNVELAFLAIAKELKYRAGRQPDEPSFQIRDYVESQKKRSSCCSFV.

The segment covering 1–13 (MTGTPGAATAGDG) has biased composition (low complexity). The tract at residues 1 to 22 (MTGTPGAATAGDGEAPERSPPF) is disordered. An N-acetylthreonine modification is found at threonine 2. GTP-binding residues include serine 38, glycine 39, valine 40, glycine 41, lysine 42, threonine 43, cysteine 44, and threonine 62. Threonine 43 provides a ligand contact to Mg(2+). 2 consecutive short sequence motifs (switch) follow at residues 52-67 (GAFLSGTFIATVGIDS) and 85-102 (DTAGQERFRSVTHAYYRD). The Mg(2+) site is built by threonine 62 and aspartate 85. 7 residues coordinate GTP: glycine 88, asparagine 143, lysine 144, aspartate 146, serine 173, alanine 174, and lysine 175. 2 S-geranylgeranyl cysteine lipidation sites follow: cysteine 219 and cysteine 220. Position 220 is a cysteine methyl ester (cysteine 220). A propeptide spans 221–223 (SFV) (removed in mature form).

It belongs to the small GTPase superfamily. Rab family. As to quaternary structure, interacts with RIMS1. Interacts (in GDP-bound form) with RPGR, RPGR functions as guanine exchange factor (GEF). It depends on Mg(2+) as a cofactor. In terms of tissue distribution, expressed in the retina (at protein level). Specifically expressed in the bone marrow mast cells.

It localises to the cytoplasmic vesicle. The protein resides in the cell projection. The protein localises to the cilium. The catalysed reaction is GTP + H2O = GDP + phosphate + H(+). Regulated by guanine nucleotide exchange factors (GEFs) including RPGR which promote the exchange of bound GDP for free GTP. Regulated by GTPase activating proteins (GAPs) which increase the GTP hydrolysis activity. Inhibited by GDP dissociation inhibitors (GDIs). Functionally, the small GTPases Rab are key regulators of intracellular membrane trafficking, from the formation of transport vesicles to their fusion with membranes. Rabs cycle between an inactive GDP-bound form and an active GTP-bound form that is able to recruit to membranes different sets of downstream effectors directly responsible for vesicle formation, movement, tethering and fusion. Acts as an organizer for autophagosome biogenesis in a GTP-dependent manner. Involved in retinal homeostasis by autophagy regulation. This Mus musculus (Mouse) protein is Ras-related protein Rab-37.